A 207-amino-acid polypeptide reads, in one-letter code: MNEFIYPEARLIAGVDEVGRGPLVGAVVTAAVILDPSRPIVGLGDSKKLSEKRRLALYDEIKDKALSWSLGRAEPEEIDQLNILHATMLAMQRAVAGLHLSPDFVLIDGNRCPALAMPSRAVVKGDSLVPEISAASILAKVTRDREMCELDLQYPQYGFARHKGYPTAVHVEKLAQFGATPQHRRSFAPVRNALLDAELAAAVARTL.

One can recognise an RNase H type-2 domain in the interval 10–199; the sequence is RLIAGVDEVG…VRNALLDAEL (190 aa). Residues D16, E17, and D108 each contribute to the a divalent metal cation site.

Belongs to the RNase HII family. The cofactor is Mn(2+). Mg(2+) serves as cofactor.

The protein resides in the cytoplasm. The enzyme catalyses Endonucleolytic cleavage to 5'-phosphomonoester.. Functionally, endonuclease that specifically degrades the RNA of RNA-DNA hybrids. The chain is Ribonuclease HII from Erwinia tasmaniensis (strain DSM 17950 / CFBP 7177 / CIP 109463 / NCPPB 4357 / Et1/99).